We begin with the raw amino-acid sequence, 970 residues long: MAAQCGGYMNQSDPGSNSERSADSPLPGSEDDSPGSAAPHDPEWREERFRVDRKKLETMLQAAAEGKGKSGEDFFQKIMEETNTQIAWPSKLKIGAKSKKDPHIKVSGKKENVKEAKERIMSVLDTKSNRVTLKMDVSHTEHSHVIGKGGNNIKKVMEETGCHIHFPDSNRNNQAEKSNQVSIAGQPAGVESARVRIRELLPLVLMFELPIAGILQPIPDPNSPTIQQISQTYNITVSFKQRSRVYGATVIVRGSQNNTSAVKEGTAMLLEHLAGSLASAIPVSTQLDIAAQHHLFMMGRNGCNIKHIMQRTGAQIHFPDPNNPLKKSTVYLQGTIESVCLARQYLMGCLPLVLMFDMKEEIEVEPQCITQLMEQLDVFISIKPKPKQPSKSVIVKSVERNALNMYEARKCLLGLDSSGVTITNQSTISCPIPMNCHGLDILAAGLGLSGLGLLGPNTLSVNSTTAQNSLLNALNSSVSPLHSPSSAAPSPTLWATSLANTSNATGFPAIPHLMIPSAAQATLTNFLLSGVPNYGQNTPSPPPGLTPVDVHMNGLHSECKKVTSVLNGHVKPTNMKYGTISSSSLGDKVLNTNLAEASRQSNNHSSAEEVNSKTDSEGCNDAFVEVGMPRSPSHSANTKDLKQMLNSTKAPCPTRQTVKLLHGTKNSHLHTAERLLSDSEMSPTEGPMTDKKAPGSERAAERAAAQHNCEMARFTSQSAYGNMQAYDYEQKKLLATKAMLKKPVVTEVRTPTNTWSGLGFSKSMPAETIKELRRANHVPYKPTMSTTYENSPMSLSRSNSREQLGNGSDSDNWRERNGIDSSHNDYSSSIGSPKRKQNKSAEHYLSSSNYMDCISSLTGSNGCNLNSSFKGSDLPELFSKLGLGKYTDIFQQQEIDLQTFLTLTDQDLKELGITTFGARRKMLLAISELNKNRRKLFEPTNIRSSFLEGGASGRLPRQYHTDIASVSGRW.

The tract at residues 1 to 50 (MAAQCGGYMNQSDPGSNSERSADSPLPGSEDDSPGSAAPHDPEWREERFR) is disordered. Over residues 9–19 (MNQSDPGSNSE) the composition is skewed to polar residues. Basic and acidic residues predominate over residues 40 to 50 (HDPEWREERFR). KH domains follow at residues 130–197 (RVTL…RVRI) and 282–346 (PVST…RQYL). Over residues 596 to 605 (EASRQSNNHS) the composition is skewed to polar residues. Disordered stretches follow at residues 596–638 (EASR…SANT), 677–696 (SDSE…APGS), and 773–841 (RRAN…NKSA). The segment covering 606–616 (SAEEVNSKTDS) has biased composition (basic and acidic residues). 2 stretches are compositionally biased toward polar residues: residues 783–810 (TMST…GSDS) and 819–831 (IDSS…SSIG). The 64-residue stretch at 869–932 (FKGSDLPELF…LLAISELNKN (64 aa)) folds into the SAM domain.

The protein belongs to the BicC family.

Functionally, putative RNA-binding protein. May be involved in regulating gene expression during embryonic development. Seems to be involved in endoderm formation. Ectopic expression results in endoderm formation in the absence of mesoderm induction. This chain is Protein bicaudal C homolog 1-B (bicc1-b), found in Xenopus laevis (African clawed frog).